The sequence spans 150 residues: Protein-export protein SecB (150 aa).

The protein belongs to the SecB family. In terms of assembly, homotetramer, a dimer of dimers. One homotetramer interacts with 1 SecA dimer.

It is found in the cytoplasm. Its function is as follows. One of the proteins required for the normal export of preproteins out of the cell cytoplasm. It is a molecular chaperone that binds to a subset of precursor proteins, maintaining them in a translocation-competent state. It also specifically binds to its receptor SecA. In Acidovorax ebreus (strain TPSY) (Diaphorobacter sp. (strain TPSY)), this protein is Protein-export protein SecB.